A 278-amino-acid polypeptide reads, in one-letter code: MKFRALMQDPLYMKEFQAIVATLTKLAKDCVMILGSRQMHFIVNEDQSSAASPLVWAGITAEEYFPEYRMEAAHPDQEYIVLGVSSANLGRALSVLRGGGVNSCKLKLQRIQFPCISVIASVLTSSSTEAREVVHDVPVTIIPGSDWSAYVVPRVPNSQLALGLPSLRLLKSLIDKLKNISPSLEFQVNVDGELNVIATSEMSTVTSRFQKLLIRTVSGSQQEASCSVDSRKASAFFGALQLPNEELTIGIDREHSIHLQIDVRQDVVLHSILPAVCM.

It belongs to the HUS1 family. In terms of assembly, component of the 9-1-1 checkpoint clamp complex consisting of Rad9 isoform A, Rad1 and Hus1-like; the interactions with Rad1 and Rad9 are direct. This complex probably also forms with Rad9 isoform B, however 9-1-1 complex containing Rad9 isoform A localizes to the nuclear periphery. Expressed in ovary.

The protein resides in the cytoplasm. The protein localises to the nucleus envelope. In terms of biological role, component of the 9-1-1 checkpoint clamp complex. Involved in both meiotic and somatic DNA damage responses. Essential for activation of the meiotic checkpoint in response to double-strand DNA breaks; required for the S-phase checkpoint but not the G2-M phase checkpoint. Involved in double strand break repair by homologous recombination during meiosis; influences the organization of chromosomal DNA in the meiotic nucleus. The protein is Checkpoint protein Hus1-like of Drosophila melanogaster (Fruit fly).